A 283-amino-acid polypeptide reads, in one-letter code: Small aggregate formation protein (283 aa).

The protein localises to the cytoplasm. In terms of biological role, knockout of the gene for this protein causes small aggregate formation. May regulate the secretion or processing of a secreted factor that regulates aggregate size. In Dictyostelium discoideum (Social amoeba), this protein is Small aggregate formation protein (smlA).